The primary structure comprises 116 residues: Staphylococcal complement inhibitor (116 aa).

The first 31 residues, methionine 1 to alanine 31, serve as a signal peptide directing secretion. The tract at residues leucine 62–glycine 79 is essential for activity.

This sequence belongs to the SCIN family.

The protein resides in the secreted. Involved in countering the first line of host defense mechanisms. Efficiently inhibits opsonization, phagocytosis and killing of S.aureus by human neutrophils. Acts by binding and stabilizing human C3 convertases (C4b2a and C3bBb), leading to their inactivation. The convertases are no longer able to cleave complement C3, therefore preventing further C3b deposition on the bacterial surface and phagocytosis of the bacterium. Also prevents C5a-induced neutrophil responses. This Staphylococcus aureus (strain N315) protein is Staphylococcal complement inhibitor (scn).